The primary structure comprises 138 residues: MRTLWIMAVLLVGVEGHLMQFETLIMKVAGRSGVWYYGSYGCFCGAGGQGRPQDASDRCCFVHDCCYGKVNGCDPKKDFYTYSEENGAIVCGGDDPCKKEICECDKDAAICFRDNKDTYDNKYWFFPAKNCQEESEPC.

The signal sequence occupies residues 1 to 16; sequence MRTLWIMAVLLVGVEG. Intrachain disulfides connect cysteine 42–cysteine 131, cysteine 44–cysteine 60, cysteine 59–cysteine 111, cysteine 65–cysteine 138, cysteine 66–cysteine 104, cysteine 73–cysteine 97, and cysteine 91–cysteine 102. Phenylalanine 43, glycine 45, and glycine 47 together coordinate Ca(2+). Histidine 63 is an active-site residue. Residue aspartate 64 participates in Ca(2+) binding. Residue aspartate 105 is part of the active site.

Belongs to the phospholipase A2 family. Group II subfamily. D49 sub-subfamily. Requires Ca(2+) as cofactor. As to expression, expressed by the venom gland.

It localises to the secreted. The catalysed reaction is a 1,2-diacyl-sn-glycero-3-phosphocholine + H2O = a 1-acyl-sn-glycero-3-phosphocholine + a fatty acid + H(+). Its function is as follows. Snake venom phospholipase A2 (PLA2) that has high lipolytic activity. PLA2 catalyzes the calcium-dependent hydrolysis of the 2-acyl groups in 3-sn-phosphoglycerides. The chain is Acidic phospholipase A2 1 from Craspedocephalus gramineus (Bamboo pit viper).